The chain runs to 92 residues: Small archaeal modifier protein 3 (92 aa).

Glycyl lysine isopeptide (Lys-Gly) (interchain with G-Cter in SAMP3) cross-links involve residues Lys18, Lys55, and Lys62. Glycyl adenylate; alternate is present on Gly92. A Glycyl lysine isopeptide (Gly-Lys) (interchain with K-? in acceptor proteins); alternate cross-link involves residue Gly92.

As to quaternary structure, monomer. Post-translationally, the C-terminal glycine is likely acyl-adenylated (-COAMP) by UbaA.

In terms of biological role, functions as a protein modifier covalently attached to lysine residues of substrate proteins. The protein modification process is termed sampylation and involves the formation of an isopeptide bond between the SAMP3 C-terminal glycine carboxylate and the epsilon-amino group of lysine residues on target proteins. Seems to be able to form polymeric chains with itself at Lys-18, Lys-55 and Lys-62, similar to ubiquitin and other ubiquitin-like proteins. SAMP3 appears not to serve as a proteolytic signal in the cell to target proteins for degradation by proteasomes. May regulate molybdenum cofactor (MoCo) biosynthesis by inhibiting the activity of MPT synthase MoaE under aerobic conditions, providing a hierarchy of oxygen use prior to that of alternative electron acceptors such as DMSO. The protein is Small archaeal modifier protein 3 (samp3) of Haloferax volcanii (strain ATCC 29605 / DSM 3757 / JCM 8879 / NBRC 14742 / NCIMB 2012 / VKM B-1768 / DS2) (Halobacterium volcanii).